A 395-amino-acid polypeptide reads, in one-letter code: Phosphopentomutase (395 aa).

6 residues coordinate Mn(2+): Asp12, Asp289, His294, Asp330, His331, and His342.

This sequence belongs to the phosphopentomutase family. Requires Mn(2+) as cofactor.

It is found in the cytoplasm. The catalysed reaction is 2-deoxy-alpha-D-ribose 1-phosphate = 2-deoxy-D-ribose 5-phosphate. The enzyme catalyses alpha-D-ribose 1-phosphate = D-ribose 5-phosphate. It participates in carbohydrate degradation; 2-deoxy-D-ribose 1-phosphate degradation; D-glyceraldehyde 3-phosphate and acetaldehyde from 2-deoxy-alpha-D-ribose 1-phosphate: step 1/2. In terms of biological role, isomerase that catalyzes the conversion of deoxy-ribose 1-phosphate (dRib-1-P) and ribose 1-phosphate (Rib-1-P) to deoxy-ribose 5-phosphate (dRib-5-P) and ribose 5-phosphate (Rib-5-P), respectively. This is Phosphopentomutase from Levilactobacillus brevis (strain ATCC 367 / BCRC 12310 / CIP 105137 / JCM 1170 / LMG 11437 / NCIMB 947 / NCTC 947) (Lactobacillus brevis).